The primary structure comprises 79 residues: D-alanyl carrier protein (79 aa).

The Carrier domain occupies 2 to 79 (AEFKEQVLDI…MVIKKLEEIR (78 aa)). Ser37 carries the O-(pantetheine 4'-phosphoryl)serine modification.

It belongs to the DltC family. 4'-phosphopantetheine is transferred from CoA to a specific serine of apo-DCP.

Its subcellular location is the cytoplasm. Its pathway is cell wall biogenesis; lipoteichoic acid biosynthesis. In terms of biological role, carrier protein involved in the D-alanylation of lipoteichoic acid (LTA). The loading of thioester-linked D-alanine onto DltC is catalyzed by D-alanine--D-alanyl carrier protein ligase DltA. The DltC-carried D-alanyl group is further transferred to cell membrane phosphatidylglycerol (PG) by forming an ester bond, probably catalyzed by DltD. D-alanylation of LTA plays an important role in modulating the properties of the cell wall in Gram-positive bacteria, influencing the net charge of the cell wall. This Bacillus mycoides (strain KBAB4) (Bacillus weihenstephanensis) protein is D-alanyl carrier protein.